We begin with the raw amino-acid sequence, 313 residues long: Pyrimidine-specific ribonucleoside hydrolase RihB (313 aa).

The active-site Proton acceptor is the E11. E11, D16, and V124 together coordinate Ca(2+). Residues Q227 and H239 each coordinate substrate. Ca(2+) is bound at residue D240.

The protein belongs to the IUNH family. RihB subfamily. In terms of assembly, homotetramer. Ca(2+) serves as cofactor.

The enzyme catalyses a pyrimidine ribonucleoside + H2O = a pyrimidine nucleobase + D-ribose. Functionally, hydrolyzes cytidine or uridine to ribose and cytosine or uracil, respectively. Has a clear preference for cytidine over uridine. Strictly specific for ribonucleosides. In Shigella flexneri serotype 5b (strain 8401), this protein is Pyrimidine-specific ribonucleoside hydrolase RihB.